The following is a 1407-amino-acid chain: Probable phosphoribosylformylglycinamidine synthase, chloroplastic/mitochondrial (1407 aa).

The N-terminal 53 residues, 1–53 (MNTSQATRAALFLNGSNRQAMLLQRSSMSQLWGSVRMRTSRLSLNRTKAVSLR), are a transit peptide targeting the chloroplast and mitochondrion. ATP-binding positions include 407-418 (GAETGAGGRIRD), 487-489 (QGY), and Ala-786. Mg(2+) contacts are provided by Asp-787, Glu-826, Asn-830, and Asp-989. Ser-991 provides a ligand contact to ATP. The Glutamine amidotransferase type-1 domain occupies 1141–1381 (KVAVIREEGS…LMWQFPWYPT (241 aa)). The active-site Nucleophile is Cys-1235. Residues His-1366 and Glu-1368 contribute to the active site.

The protein in the N-terminal section; belongs to the FGAMS family.

It is found in the plastid. Its subcellular location is the chloroplast. It localises to the mitochondrion. It carries out the reaction N(2)-formyl-N(1)-(5-phospho-beta-D-ribosyl)glycinamide + L-glutamine + ATP + H2O = 2-formamido-N(1)-(5-O-phospho-beta-D-ribosyl)acetamidine + L-glutamate + ADP + phosphate + H(+). It participates in purine metabolism; IMP biosynthesis via de novo pathway; 5-amino-1-(5-phospho-D-ribosyl)imidazole from N(2)-formyl-N(1)-(5-phospho-D-ribosyl)glycinamide: step 1/2. Its function is as follows. Essential to the male gametophyte development. Phosphoribosylformylglycinamidine synthase involved in the purines biosynthetic pathway. Catalyzes the ATP-dependent conversion of formylglycinamide ribonucleotide (FGAR) and glutamine to yield formylglycinamidine ribonucleotide (FGAM) and glutamate. The protein is Probable phosphoribosylformylglycinamidine synthase, chloroplastic/mitochondrial of Arabidopsis thaliana (Mouse-ear cress).